A 215-amino-acid polypeptide reads, in one-letter code: Large ribosomal subunit protein eL15 (215 aa).

The segment at 179–215 is disordered; it reads GTVKHKWKKKEKEREQKKRHEATKYYRLQNYDKLPGK. Positions 188–202 are enriched in basic and acidic residues; that stretch reads KEKEREQKKRHEATK.

Belongs to the eukaryotic ribosomal protein eL15 family.

The sequence is that of Large ribosomal subunit protein eL15 from Sulfurisphaera tokodaii (strain DSM 16993 / JCM 10545 / NBRC 100140 / 7) (Sulfolobus tokodaii).